Consider the following 122-residue polypeptide: Large ribosomal subunit protein uL14 (122 aa).

The protein belongs to the universal ribosomal protein uL14 family. In terms of assembly, part of the 50S ribosomal subunit. Forms a cluster with proteins L3 and L19. In the 70S ribosome, L14 and L19 interact and together make contacts with the 16S rRNA in bridges B5 and B8.

Binds to 23S rRNA. Forms part of two intersubunit bridges in the 70S ribosome. This is Large ribosomal subunit protein uL14 from Lachnospira eligens (strain ATCC 27750 / DSM 3376 / VPI C15-48 / C15-B4) (Eubacterium eligens).